A 259-amino-acid chain; its full sequence is L-ornithine N(alpha)-acyltransferase (259 aa).

The protein belongs to the acetyltransferase family. OlsB subfamily.

The catalysed reaction is a (3R)-hydroxyacyl-[ACP] + L-ornithine = a lyso-ornithine lipid + holo-[ACP] + H(+). The protein operates within lipid metabolism. Its function is as follows. Catalyzes the first step in the biosynthesis of ornithine lipids, which are phosphorus-free membrane lipids. Catalyzes the 3-hydroxyacyl-acyl carrier protein-dependent acylation of ornithine to form lyso-ornithine lipid (LOL). The polypeptide is L-ornithine N(alpha)-acyltransferase (Rhodobacter capsulatus (strain ATCC BAA-309 / NBRC 16581 / SB1003)).